Here is a 192-residue protein sequence, read N- to C-terminus: Phosphoheptose isomerase (192 aa).

Residues L34 to R192 form the SIS domain. N49–G51 contacts substrate. Residues H58 and E62 each coordinate Zn(2+). Substrate-binding positions include E62, N91 to D92, S117 to S119, S122, and Q169. Zn(2+) is bound by residues Q169 and H177.

Belongs to the SIS family. GmhA subfamily. Homotetramer. The cofactor is Zn(2+).

Its subcellular location is the cytoplasm. It carries out the reaction 2 D-sedoheptulose 7-phosphate = D-glycero-alpha-D-manno-heptose 7-phosphate + D-glycero-beta-D-manno-heptose 7-phosphate. Its pathway is carbohydrate biosynthesis; D-glycero-D-manno-heptose 7-phosphate biosynthesis; D-glycero-alpha-D-manno-heptose 7-phosphate and D-glycero-beta-D-manno-heptose 7-phosphate from sedoheptulose 7-phosphate: step 1/1. Catalyzes the isomerization of sedoheptulose 7-phosphate in D-glycero-D-manno-heptose 7-phosphate. This chain is Phosphoheptose isomerase, found in Geotalea daltonii (strain DSM 22248 / JCM 15807 / FRC-32) (Geobacter daltonii).